A 308-amino-acid chain; its full sequence is Secreted frizzled-related protein 1 (308 aa).

A signal peptide spans 1–25 (MGGGRWAAAGALLALAAGLLAAGSA). The region spanning 47-163 (TKPPQCVDIP…FPEGDVCIAM (117 aa)) is the FZ domain. 5 cysteine pairs are disulfide-bonded: Cys-52–Cys-115, Cys-62–Cys-108, Cys-99–Cys-134, Cys-123–Cys-160, and Cys-127–Cys-151. Asn-167 carries N-linked (GlcNAc...) asparagine glycosylation. 3 cysteine pairs are disulfide-bonded: Cys-180–Cys-250, Cys-183–Cys-252, and Cys-197–Cys-300. The 121-residue stretch at 180 to 300 (CPPCDNELKS…FMKKMKNHEC (121 aa)) folds into the NTR domain.

Belongs to the secreted frizzled-related protein (sFRP) family. Interacts with WNT1, WNT2, WNT4, WNT8, MYOC and FRZD6. In terms of tissue distribution, highest levels in aortic endothelium, heart, spleen and eye. Lower levels in lung, brain and kidney. Weak expression in liver, skeletal muscle and the medial layer of the aorta. In the cortical brain, localized to neurons and small blood vessels. In the retina, localized to the inner and outer nuclear layers with high expression in the neuronal cell bodies. In the heart, restricted to myocytes. In lung, highest expression found in the epithelium of terminal bronchioles. In kidney, localized to the epithelium of collecting ducts of the medulla and, in spleen, expression restricted to the red pulp in cells associated with the sinuses.

The protein localises to the secreted. Functionally, soluble frizzled-related proteins (sFRPS) function as modulators of Wnt signaling through direct interaction with Wnts. They have a role in regulating cell growth and differentiation in specific cell types. SFRP1 decreases intracellular beta-catenin levels. Has antiproliferative effects on vascular cells, in vitro and in vivo, and can induce, in vivo, an angiogenic response. In vascular cell cycle, delays the G1 phase and entry into the S phase. In kidney development, inhibits tubule formation and bud growth in metanephroi. Inhibits WNT1/WNT4-mediated TCF-dependent transcription. The protein is Secreted frizzled-related protein 1 (SFRP1) of Bos taurus (Bovine).